The primary structure comprises 124 residues: Small ribosomal subunit protein bS6 (124 aa).

Residues 93-124 form a disordered region; it reads KKAETGPSSMMKTVEREEARKAQQAEYAANNS. Residues 105–115 are compositionally biased toward basic and acidic residues; it reads TVEREEARKAQ.

It belongs to the bacterial ribosomal protein bS6 family.

Binds together with bS18 to 16S ribosomal RNA. The chain is Small ribosomal subunit protein bS6 from Variovorax paradoxus (strain S110).